Reading from the N-terminus, the 232-residue chain is Small ribosomal subunit protein uS5 (232 aa).

The tract at residues 1–47 (MAAEVTETAQPVETAASTDNNREQREPRRGGRERNPNRDRGNRDADK) is disordered. Over residues 7–19 (ETAQPVETAASTD) the composition is skewed to polar residues. Positions 20–47 (NNREQREPRRGGRERNPNRDRGNRDADK) are enriched in basic and acidic residues. An S5 DRBM domain is found at 50-113 (FLERVVTINR…EEAKKNFFRV (64 aa)).

Belongs to the universal ribosomal protein uS5 family. Part of the 30S ribosomal subunit. Contacts proteins S4 and S8.

In terms of biological role, with S4 and S12 plays an important role in translational accuracy. Its function is as follows. Located at the back of the 30S subunit body where it stabilizes the conformation of the head with respect to the body. The polypeptide is Small ribosomal subunit protein uS5 (Leifsonia xyli subsp. xyli (strain CTCB07)).